A 1212-amino-acid polypeptide reads, in one-letter code: Nucleolar protein 6 (1212 aa).

2 disordered regions span residues 1-72 (MGKI…PVSI) and 1156-1212 (KREQ…KSLS). The span at 1197–1212 (LKRKSLIKSRPLKSLS) shows a compositional bias: basic residues.

It belongs to the NRAP family. Part of the small subunit (SSU) processome, composed of more than 70 proteins and the RNA chaperone small nucleolar RNA (snoRNA) U3.

It is found in the nucleus. The protein resides in the nucleolus. The protein localises to the chromosome. In terms of biological role, part of the small subunit (SSU) processome, first precursor of the small eukaryotic ribosomal subunit. During the assembly of the SSU processome in the nucleolus, many ribosome biogenesis factors, an RNA chaperone and ribosomal proteins associate with the nascent pre-rRNA and work in concert to generate RNA folding, modifications, rearrangements and cleavage as well as targeted degradation of pre-ribosomal RNA by the RNA exosome. This Drosophila persimilis (Fruit fly) protein is Nucleolar protein 6.